The sequence spans 402 residues: Selenoprotein P (402 aa).

Positions 1 to 19 (MWRGLGLALALCLLLTGGT) are cleaved as a signal peptide. Position 59 (Sec-59) is a non-standard amino acid, selenocysteine. Asn-83 and Asn-174 each carry an N-linked (GlcNAc...) asparagine glycan. The interval 196 to 291 (KTAEASQRHH…VGSESLQPSL (96 aa)) is disordered. Over residues 203–231 (RHHHPHPHSHPHPHPHPHPHPHPHPHHGH) the composition is skewed to basic residues. 13 repeat units span residues 204-205 (HH), 206-207 (HP), 208-209 (HP), 210-211 (HS), 212-213 (HP), 214-215 (HP), 216-217 (HP), 218-219 (HP), 220-221 (HP), 222-223 (HP), 224-225 (HP), 226-227 (HP), and 228-229 (HH). The interval 204 to 229 (HHHPHPHSHPHPHPHPHPHPHPHPHH) is 13 X 2 AA tandem repeats of H-[PHS]. A compositionally biased stretch (basic and acidic residues) spans 232–247 (QLHENAHLSESPKPDT). The segment covering 259–269 (LHHHHHRHKGP) has biased composition (basic residues). Ser-284 is modified (phosphoserine). 11 non-standard amino acids (selenocysteine) are found at residues Sec-297, Sec-307, Sec-338, Sec-350, Sec-363, Sec-365, Sec-372, Sec-388, Sec-390, Sec-397, and Sec-399. The interval 367–402 (LPPAAUQAAGQQLNPTEASTKUSUKNKAKMUKUPSN) is disordered.

Belongs to the selenoprotein P family. In terms of processing, phosphorylation sites are present in the extracellular medium. As to expression, brain and kidney. Most prominently expressed in the cerebellar cortex, hippocampus and olfactory bulb.

Its subcellular location is the secreted. Its function is as follows. Constitutes a major selenium pool in the brain and may play an important role in developing and/or modulating the morphology of neurons and/or glial cells. The chain is Selenoprotein P from Bos taurus (Bovine).